Reading from the N-terminus, the 426-residue chain is Trigger factor (426 aa).

In terms of domain architecture, PPIase FKBP-type spans 166–249; sequence GDIVTFDFKG…IIEVKARELP (84 aa).

Belongs to the FKBP-type PPIase family. Tig subfamily.

It localises to the cytoplasm. The enzyme catalyses [protein]-peptidylproline (omega=180) = [protein]-peptidylproline (omega=0). Its function is as follows. Involved in protein export. Acts as a chaperone by maintaining the newly synthesized protein in an open conformation. Functions as a peptidyl-prolyl cis-trans isomerase. The chain is Trigger factor from Mesoplasma florum (strain ATCC 33453 / NBRC 100688 / NCTC 11704 / L1) (Acholeplasma florum).